The chain runs to 446 residues: Glucose-6-phosphate isomerase (446 aa).

Catalysis depends on glutamate 287, which acts as the Proton donor. Catalysis depends on residues histidine 308 and lysine 422.

This sequence belongs to the GPI family.

The protein resides in the cytoplasm. It catalyses the reaction alpha-D-glucose 6-phosphate = beta-D-fructose 6-phosphate. Its pathway is carbohydrate biosynthesis; gluconeogenesis. It functions in the pathway carbohydrate degradation; glycolysis; D-glyceraldehyde 3-phosphate and glycerone phosphate from D-glucose: step 2/4. Its function is as follows. Catalyzes the reversible isomerization of glucose-6-phosphate to fructose-6-phosphate. The chain is Glucose-6-phosphate isomerase from Lactobacillus helveticus (strain DPC 4571).